A 397-amino-acid polypeptide reads, in one-letter code: Anhydro-N-acetylmuramic acid kinase (397 aa).

21–28 contributes to the ATP binding site; it reads GTSLDGVD. Positions 373–384 are enriched in polar residues; that stretch reads TPTNLPSVTGAS. The disordered stretch occupies residues 373 to 397; the sequence is TPTNLPSVTGASARTPLGSLSVPGP.

It belongs to the anhydro-N-acetylmuramic acid kinase family.

It catalyses the reaction 1,6-anhydro-N-acetyl-beta-muramate + ATP + H2O = N-acetyl-D-muramate 6-phosphate + ADP + H(+). It functions in the pathway amino-sugar metabolism; 1,6-anhydro-N-acetylmuramate degradation. It participates in cell wall biogenesis; peptidoglycan recycling. In terms of biological role, catalyzes the specific phosphorylation of 1,6-anhydro-N-acetylmuramic acid (anhMurNAc) with the simultaneous cleavage of the 1,6-anhydro ring, generating MurNAc-6-P. Is required for the utilization of anhMurNAc either imported from the medium or derived from its own cell wall murein, and thus plays a role in cell wall recycling. The sequence is that of Anhydro-N-acetylmuramic acid kinase from Salinibacter ruber (strain DSM 13855 / M31).